The sequence spans 208 residues: Superoxide dismutase [Mn] 2 (208 aa).

His28, His83, Asp165, and His169 together coordinate Mn(2+).

Belongs to the iron/manganese superoxide dismutase family. In terms of assembly, homodimer. Requires Mn(2+) as cofactor.

The enzyme catalyses 2 superoxide + 2 H(+) = H2O2 + O2. In terms of biological role, destroys superoxide anion radicals which are normally produced within the cells and which are toxic to biological systems. The protein is Superoxide dismutase [Mn] 2 (sodA2) of Bacillus cereus (strain ATCC 14579 / DSM 31 / CCUG 7414 / JCM 2152 / NBRC 15305 / NCIMB 9373 / NCTC 2599 / NRRL B-3711).